A 116-amino-acid chain; its full sequence is Putative pterin-4-alpha-carbinolamine dehydratase (116 aa).

This sequence belongs to the pterin-4-alpha-carbinolamine dehydratase family.

It carries out the reaction (4aS,6R)-4a-hydroxy-L-erythro-5,6,7,8-tetrahydrobiopterin = (6R)-L-erythro-6,7-dihydrobiopterin + H2O. The polypeptide is Putative pterin-4-alpha-carbinolamine dehydratase (Stenotrophomonas maltophilia (strain K279a)).